Reading from the N-terminus, the 307-residue chain is Putative oxidoreductase YceM (307 aa).

This sequence belongs to the Gfo/Idh/MocA family.

The chain is Putative oxidoreductase YceM (yceM) from Escherichia coli (strain K12).